The chain runs to 304 residues: Aquaglyceroporin-3 (304 aa).

Topologically, residues 1–68 are cytoplasmic; that stretch reads MQSQPDNVAY…LRLNYRDYMG (68 aa). A helical membrane pass occupies residues 69–89; the sequence is ELLGTFVLLFMGNGVVATVII. At 90-95 the chain is on the extracellular side; the sequence is DGKLGF. The chain crosses the membrane as a helical span at residues 96–116; sequence LSITLGWGIAVTMALYVSLGI. The Cytoplasmic portion of the chain corresponds to 117–142; sequence SSGHLNPAVTVGNAVFGDFPWRKVPG. A helical transmembrane segment spans residues 143 to 163; that stretch reads YIAAQMLGAFLGAACAYGVFA. Topologically, residues 164–196 are extracellular; sequence DLLKAHGGGELIAFGEKGTAGVFSTYPRDSNGL. Residues 197-217 traverse the membrane as a helical segment; sequence FSCIFGEFICTAMLLFCVCGI. Topologically, residues 218–231 are cytoplasmic; that stretch reads FDPNNSPAKGHEPL. Residues 232–252 traverse the membrane as a helical segment; sequence AVGALVFAIGNNIGYSTGYAI. The Extracellular segment spans residues 253 to 277; the sequence is NPARDFGPRVFSSFLYGGEVFSHAN. The helical transmembrane segment at 278–298 threads the bilayer; it reads YYFWVPLVIPLFGGIFGLFLY. The Cytoplasmic segment spans residues 299-304; the sequence is KYFVPH.

Belongs to the MIP/aquaporin (TC 1.A.8) family.

It is found in the cell membrane. The enzyme catalyses glycerol(in) = glycerol(out). It catalyses the reaction H2O(in) = H2O(out). The catalysed reaction is urea(in) = urea(out). Functionally, mediates water and glycerol transport across the cell membrane. Permeable to urea. Permeable to methylamine/methylammonium. Permeable to dihydroxyacetone. Permeable to erythritol and ribitol. The protein is Aquaglyceroporin-3 of Trypanosoma brucei brucei.